A 350-amino-acid polypeptide reads, in one-letter code: 26S proteasome non-ATPase regulatory subunit 8 (350 aa).

Residues 1–24 are disordered; that stretch reads MFIKGRAPRAPPRERRRATRGGLR. Serine 106 is modified (phosphoserine). A PCI domain is found at 162 to 331; it reads PSFERYMAQL…QQKPEDTTIP (170 aa). Lysine 297 participates in a covalent cross-link: Glycyl lysine isopeptide (Lys-Gly) (interchain with G-Cter in SUMO2).

Belongs to the proteasome subunit S14 family. As to quaternary structure, component of the 19S proteasome regulatory particle complex. The 26S proteasome consists of a 20S core particle (CP) and two 19S regulatory subunits (RP). The regulatory particle is made of a lid composed of 9 subunits including PSMD8, a base containing 6 ATPases and few additional components. Interacts with DDI2. Interacts with TASOR.

Component of the 26S proteasome, a multiprotein complex involved in the ATP-dependent degradation of ubiquitinated proteins. This complex plays a key role in the maintenance of protein homeostasis by removing misfolded or damaged proteins, which could impair cellular functions, and by removing proteins whose functions are no longer required. Therefore, the proteasome participates in numerous cellular processes, including cell cycle progression, apoptosis, or DNA damage repair. This Homo sapiens (Human) protein is 26S proteasome non-ATPase regulatory subunit 8 (PSMD8).